A 106-amino-acid polypeptide reads, in one-letter code: Small ribosomal subunit protein uS10 (106 aa).

This sequence belongs to the universal ribosomal protein uS10 family. As to quaternary structure, part of the 30S ribosomal subunit.

Involved in the binding of tRNA to the ribosomes. The chain is Small ribosomal subunit protein uS10 from Pyrobaculum calidifontis (strain DSM 21063 / JCM 11548 / VA1).